A 333-amino-acid polypeptide reads, in one-letter code: MKIAIDGMGGDNAPVAVIDGAIQALKAYDDIQLYITGPEEVLNIELAKYTYPKEKVIVVDAKEVISPNEHPVMALRKKKNSSIVKALNLVKEGICDAVVSGGSTGAFLAGCTLIIGRIKGIERPALAPIMPGRRGKFMIVDVGANVDCKPSFLVQFAKMGKIYYQKVFNVKNPTIGLINIGEEEEKGNELTKAAFKLLKEESSINFKGNIEPREIPTGDTNILVSDGFVGNTALKMYEGSASSILGIIKDEVLKSSIISKIGVVLLKPVLKNIMKKFDYKEYGGAPFLGVDGICIKAHGSSDARAFKNSIKQTKIFYDNNVLKDIRNEFSSEN.

This sequence belongs to the PlsX family. In terms of assembly, homodimer. Probably interacts with PlsY.

It localises to the cytoplasm. The catalysed reaction is a fatty acyl-[ACP] + phosphate = an acyl phosphate + holo-[ACP]. It functions in the pathway lipid metabolism; phospholipid metabolism. Its function is as follows. Catalyzes the reversible formation of acyl-phosphate (acyl-PO(4)) from acyl-[acyl-carrier-protein] (acyl-ACP). This enzyme utilizes acyl-ACP as fatty acyl donor, but not acyl-CoA. In Clostridium beijerinckii (strain ATCC 51743 / NCIMB 8052) (Clostridium acetobutylicum), this protein is Phosphate acyltransferase.